A 309-amino-acid chain; its full sequence is Protoheme IX farnesyltransferase (309 aa).

A run of 9 helical transmembrane segments spans residues 30-49 (VMSL…PGGV), 53-75 (IGFT…NMWY), 98-118 (AGEA…MLGL), 123-143 (VAAG…SMWL), 151-171 (IVIG…AVTG), 178-198 (VLMF…LALF), 224-244 (ILIY…TEVA), 247-267 (VYLI…YDIW), and 285-305 (VFKF…LDAI).

This sequence belongs to the UbiA prenyltransferase family. Protoheme IX farnesyltransferase subfamily. Interacts with CtaA.

It is found in the cell inner membrane. It catalyses the reaction heme b + (2E,6E)-farnesyl diphosphate + H2O = Fe(II)-heme o + diphosphate. The protein operates within porphyrin-containing compound metabolism; heme O biosynthesis; heme O from protoheme: step 1/1. Functionally, converts heme B (protoheme IX) to heme O by substitution of the vinyl group on carbon 2 of heme B porphyrin ring with a hydroxyethyl farnesyl side group. The polypeptide is Protoheme IX farnesyltransferase (Jannaschia sp. (strain CCS1)).